The chain runs to 429 residues: Glucose-1-phosphate adenylyltransferase (429 aa).

Alpha-D-glucose 1-phosphate is bound by residues Gly-162, Glu-177 to Lys-178, and Ser-209.

Belongs to the bacterial/plant glucose-1-phosphate adenylyltransferase family. Homotetramer.

The catalysed reaction is alpha-D-glucose 1-phosphate + ATP + H(+) = ADP-alpha-D-glucose + diphosphate. Its pathway is glycan biosynthesis; glycogen biosynthesis. With respect to regulation, activated by 3-phosphoglycerate and inhibited by phosphate. In terms of biological role, involved in the biosynthesis of ADP-glucose, a building block required for the elongation reactions to produce glycogen. Catalyzes the reaction between ATP and alpha-D-glucose 1-phosphate (G1P) to produce pyrophosphate and ADP-Glc. The protein is Glucose-1-phosphate adenylyltransferase of Nostoc sp. (strain PCC 7120 / SAG 25.82 / UTEX 2576).